The primary structure comprises 390 residues: Lissencephaly-1 homolog (390 aa).

A LisH domain is found at 7–39; that stretch reads QREEINRAVAEYLQNNGYSEAFNMLLKEASLSE. Residues 54 to 80 adopt a coiled-coil conformation; the sequence is TTVLRLQRKVNDLEAKLLESQQEINHG. WD repeat units lie at residues 104 to 145, 146 to 185, 189 to 228, 231 to 270, 272 to 313, 316 to 355, and 358 to 390; these read GHRL…KTLK, GHTD…DCLK, GHEH…CVFT, GHND…RNWY, EIMS…VIFT, AHEN…CMKA, and AHEH…WECR.

The protein belongs to the WD repeat LIS1/nudF family.

The protein resides in the cytoplasm. The protein localises to the cytoskeleton. It localises to the microtubule organizing center. It is found in the centrosome. Functionally, positively regulates the activity of the minus-end directed microtubule motor protein dynein. May enhance dynein-mediated microtubule sliding by targeting dynein to the microtubule plus end. Required for several dynein- and microtubule-dependent processes. The sequence is that of Lissencephaly-1 homolog from Caenorhabditis briggsae.